We begin with the raw amino-acid sequence, 103 residues long: uncharacterized protein (103 aa).

2 disordered regions span residues 1 to 20 (MIEL…WPKG) and 44 to 71 (LERM…HHLG). Residues 1–34 (MIELSYAPDVAGRRSNWPKGSGVNTWTAIRWTFA) form the signal peptide.

This is an uncharacterized protein from Mycobacterium tuberculosis (strain CDC 1551 / Oshkosh).